Here is a 365-residue protein sequence, read N- to C-terminus: Holliday junction branch migration complex subunit RuvB (365 aa).

Polar residues predominate over residues 1-10 (MAIVSSNAAS). Positions 1–48 (MAIVSSNAASQRPRPDRGPDRVPNRVVDGARQAEDDRDPGRVGAKEDS) are disordered. Basic and acidic residues-rich tracts occupy residues 13–23 (PRPDRGPDRVP) and 31–48 (RQAEDDRDPGRVGAKEDS). A large ATPase domain (RuvB-L) region spans residues 13-210 (PRPDRGPDRV…FGLIQRLEFY (198 aa)). Leu49, Arg50, Gly91, Lys94, Thr95, Thr96, Arg200, Tyr210, and Arg247 together coordinate ATP. Thr95 contributes to the Mg(2+) binding site. The segment at 211–282 (GLEDLQAIVE…LVDEALTLHR (72 aa)) is small ATPAse domain (RuvB-S). Residues 285–365 (GRGLDASDRR…GWPYPQEQAA (81 aa)) are head domain (RuvB-H). DNA contacts are provided by Arg340 and Arg345.

This sequence belongs to the RuvB family. Homohexamer. Forms an RuvA(8)-RuvB(12)-Holliday junction (HJ) complex. HJ DNA is sandwiched between 2 RuvA tetramers; dsDNA enters through RuvA and exits via RuvB. An RuvB hexamer assembles on each DNA strand where it exits the tetramer. Each RuvB hexamer is contacted by two RuvA subunits (via domain III) on 2 adjacent RuvB subunits; this complex drives branch migration. In the full resolvosome a probable DNA-RuvA(4)-RuvB(12)-RuvC(2) complex forms which resolves the HJ.

Its subcellular location is the cytoplasm. The catalysed reaction is ATP + H2O = ADP + phosphate + H(+). Functionally, the RuvA-RuvB-RuvC complex processes Holliday junction (HJ) DNA during genetic recombination and DNA repair, while the RuvA-RuvB complex plays an important role in the rescue of blocked DNA replication forks via replication fork reversal (RFR). RuvA specifically binds to HJ cruciform DNA, conferring on it an open structure. The RuvB hexamer acts as an ATP-dependent pump, pulling dsDNA into and through the RuvAB complex. RuvB forms 2 homohexamers on either side of HJ DNA bound by 1 or 2 RuvA tetramers; 4 subunits per hexamer contact DNA at a time. Coordinated motions by a converter formed by DNA-disengaged RuvB subunits stimulates ATP hydrolysis and nucleotide exchange. Immobilization of the converter enables RuvB to convert the ATP-contained energy into a lever motion, pulling 2 nucleotides of DNA out of the RuvA tetramer per ATP hydrolyzed, thus driving DNA branch migration. The RuvB motors rotate together with the DNA substrate, which together with the progressing nucleotide cycle form the mechanistic basis for DNA recombination by continuous HJ branch migration. Branch migration allows RuvC to scan DNA until it finds its consensus sequence, where it cleaves and resolves cruciform DNA. The chain is Holliday junction branch migration complex subunit RuvB from Synechococcus sp. (strain WH7803).